We begin with the raw amino-acid sequence, 187 residues long: Elongation factor P (187 aa).

This sequence belongs to the elongation factor P family.

It is found in the cytoplasm. Its pathway is protein biosynthesis; polypeptide chain elongation. In terms of biological role, involved in peptide bond synthesis. Stimulates efficient translation and peptide-bond synthesis on native or reconstituted 70S ribosomes in vitro. Probably functions indirectly by altering the affinity of the ribosome for aminoacyl-tRNA, thus increasing their reactivity as acceptors for peptidyl transferase. The polypeptide is Elongation factor P (Desulfotalea psychrophila (strain LSv54 / DSM 12343)).